Consider the following 235-residue polypeptide: Claudin-15 (235 aa).

Position 1 (Met-1) is a topological domain, cytoplasmic. Residues 2-24 (LVAVEIFGFFLTAVGLLMLGVTL) traverse the membrane as a helical segment. Over 25-74 (AHSSWRVSTVHGNVITTNTIFENLWYSCATDSMGVHNCWEFPSMLALSGY) the chain is Extracellular. Cys-52 and Cys-62 are disulfide-bonded. Residues 75–99 (IQACRALMITAILLGFLGLFLGMVG) form a helical membrane-spanning segment. At 100 to 115 (LRCTNIGGLELSRKTK) the chain is on the cytoplasmic side. Ser-111 carries the phosphoserine modification. The chain crosses the membrane as a helical span at residues 116-140 (LAATAGALHILAGICGMVAVSWYAF). Topologically, residues 141–159 (NITRDFFNPLYAGTKYELG) are extracellular. Residues 146-147 (FF) form an important for the formation of tight-junction strand-like structures region. A helical transmembrane segment spans residues 160–182 (PALYLGWSACLLAILGGICLFSN). The Cytoplasmic segment spans residues 183–235 (CCCSRDRDPATGVQLPYKAPVIPAASLAARLPAAASDEEGDSSFGKYGKNAYV). Phosphoserine is present on residues Ser-218 and Ser-225.

The protein belongs to the claudin family. As to quaternary structure, can form homo- and heteropolymeric tight junction strands. In terms of processing, palmitoylated.

It is found in the cell junction. The protein localises to the tight junction. The protein resides in the cell membrane. The catalysed reaction is Na(+)(in) = Na(+)(out). It catalyses the reaction K(+)(in) = K(+)(out). The enzyme catalyses Cs(+)(in) = Cs(+)(out). It carries out the reaction Rb(+)(in) = Rb(+)(out). The catalysed reaction is Li(+)(in) = Li(+)(out). It catalyses the reaction NH4(+)(in) = NH4(+)(out). The enzyme catalyses methylamine(out) = methylamine(in). It carries out the reaction H2O(in) = H2O(out). Functionally, forms paracellular channels: polymerizes in tight junction strands with cation- and water-selective channels through the strands, conveying epithelial permeability in a process known as paracellular tight junction permeability. In intestinal epithelium, allows for sodium and water fluxes from the peritoneal side to the lumen of the intestine to regulate nutrient absorption and intestinal morphogenesis. In Bos taurus (Bovine), this protein is Claudin-15 (CLDN15).